The following is a 439-amino-acid chain: Methylenetetrahydrofolate--tRNA-(uracil-5-)-methyltransferase TrmFO (439 aa).

Residue 8 to 13 (GGGLAG) coordinates FAD.

This sequence belongs to the MnmG family. TrmFO subfamily. It depends on FAD as a cofactor.

Its subcellular location is the cytoplasm. It catalyses the reaction uridine(54) in tRNA + (6R)-5,10-methylene-5,6,7,8-tetrahydrofolate + NADH + H(+) = 5-methyluridine(54) in tRNA + (6S)-5,6,7,8-tetrahydrofolate + NAD(+). The catalysed reaction is uridine(54) in tRNA + (6R)-5,10-methylene-5,6,7,8-tetrahydrofolate + NADPH + H(+) = 5-methyluridine(54) in tRNA + (6S)-5,6,7,8-tetrahydrofolate + NADP(+). In terms of biological role, catalyzes the folate-dependent formation of 5-methyl-uridine at position 54 (M-5-U54) in all tRNAs. The chain is Methylenetetrahydrofolate--tRNA-(uracil-5-)-methyltransferase TrmFO from Dictyoglomus turgidum (strain DSM 6724 / Z-1310).